A 518-amino-acid chain; its full sequence is Cytochrome P450 26C1 (518 aa).

The chain crosses the membrane as a helical span at residues leucine 293–leucine 313. Cysteine 455 contacts heme.

It belongs to the cytochrome P450 family. The cofactor is heme.

It is found in the membrane. It carries out the reaction an organic molecule + reduced [NADPH--hemoprotein reductase] + O2 = an alcohol + oxidized [NADPH--hemoprotein reductase] + H2O + H(+). The catalysed reaction is all-trans-retinoate + reduced [NADPH--hemoprotein reductase] + O2 = all-trans-4-hydroxyretinoate + oxidized [NADPH--hemoprotein reductase] + H2O + H(+). The enzyme catalyses all-trans-4-hydroxyretinoate + reduced [NADPH--hemoprotein reductase] + O2 = all-trans-4-oxoretinoate + oxidized [NADPH--hemoprotein reductase] + 2 H2O + H(+). It catalyses the reaction 9-cis-retinoate + reduced [NADPH--hemoprotein reductase] + O2 = 9-cis-4-hydroxyretinoate + oxidized [NADPH--hemoprotein reductase] + H2O + H(+). It carries out the reaction 9-cis-4-hydroxyretinoate + reduced [NADPH--hemoprotein reductase] + O2 = 9-cis-4-oxoretinoate + oxidized [NADPH--hemoprotein reductase] + 2 H2O + H(+). The catalysed reaction is all-trans-4-hydroxy-13,14-dihydroretinoate + reduced [NADPH--hemoprotein reductase] + O2 = all-trans-4-oxo-13,14-dihydroretinoate + oxidized [NADPH--hemoprotein reductase] + 2 H2O + H(+). The enzyme catalyses all-trans-13,14-dihydroretinoate + reduced [NADPH--hemoprotein reductase] + O2 = all-trans-4-hydroxy-13,14-dihydroretinoate + oxidized [NADPH--hemoprotein reductase] + H2O + H(+). Functionally, a cytochrome P450 monooxygenase involved in the metabolism of retinoates (RAs), the active metabolites of vitamin A, and critical signaling molecules in animals. RAs exist as at least four different isomers: all-trans-RA (atRA), 9-cis-RA, 13-cis-RA, and 9,13-dicis-RA, where atRA is considered to be the biologically active isomer, although 9-cis-RA and 13-cis-RA also have activity. Catalyzes the oxidation of atRA primarily at C-4. Oxidation of atRA limits its biological activity and initiates a degradative process leading to its eventual elimination, thereby contributes to the regulation of atRA homeostasis and signaling. Able to metabolize other RAs such as 9-cis with high efficiency. Can oxidize all-trans-13,14-dihydroretinoate (DRA) to metabolites which could include all-trans-4-oxo-DRA, all-trans-4-hydroxy-DRA, all-trans-5,8-epoxy-DRA, and all-trans-18-hydroxy-DRA. Shares sequence similarity with other CYP26 family members, but has higher affinity to 9-cis-RA and is much less sensitive to the inhibitory effects of ketoconazole. In cooperation with Cyp26a1, contributes to the CNS patterning and the development of regions of higher visual acuity. The polypeptide is Cytochrome P450 26C1 (Mus musculus (Mouse)).